Reading from the N-terminus, the 296-residue chain is Nucleotide-binding protein SUB0630 (296 aa).

ATP is bound at residue 13–20 (GMSGAGKT). 63–66 (DMRS) contacts GTP.

It belongs to the RapZ-like family.

In terms of biological role, displays ATPase and GTPase activities. This is Nucleotide-binding protein SUB0630 from Streptococcus uberis (strain ATCC BAA-854 / 0140J).